Consider the following 689-residue polypeptide: Protein asunder (689 aa).

Positions 521–550 (NGARLKLSKAKDQYRLLYRELEQLIQLNAT) form a coiled coil. Disordered stretches follow at residues 578–619 (GASL…SKRR) and 662–689 (PDFG…SVRS). Positions 599–614 (SSGSASGSSNSNSLLK) are enriched in low complexity. Residues 613–619 (LKASKRR) carry the Nuclear localization signal (NLS) motif.

It belongs to the Integrator subunit 13 family. As to quaternary structure, belongs to the multiprotein complex Integrator, at least composed of IntS1, IntS2, IntS3, IntS4, omd/IntS5, IntS6, defl/IntS7, IntS8, IntS9, IntS10, IntS11, IntS12, asun/IntS13, IntS14 and IntS15. The core complex associates with protein phosphatase 2A subunits mts/PP2A and Pp2A-29B, to form the Integrator-PP2A (INTAC) complex. Phosphorylated.

Its subcellular location is the nucleus. It is found in the cytoplasm. The protein localises to the perinuclear region. Component of the integrator complex, a multiprotein complex that terminates RNA polymerase II (Pol II) transcription in the promoter-proximal region of genes. The integrator complex provides a quality checkpoint during transcription elongation by driving premature transcription termination of transcripts that are unfavorably configured for transcriptional elongation: the complex terminates transcription by (1) catalyzing dephosphorylation of the C-terminal domain (CTD) of Pol II subunit Polr2A/Rbp1 and Spt5, and (2) degrading the exiting nascent RNA transcript via endonuclease activity. The integrator complex is also involved in the 3'-end processing of the U7 snRNA, and also the spliceosomal snRNAs U1, U2, U4 and U5. The polypeptide is Protein asunder (asun) (Drosophila yakuba (Fruit fly)).